Here is a 254-residue protein sequence, read N- to C-terminus: Hydroxyacylglutathione hydrolase (254 aa).

His54, His56, Asp58, His59, His111, Asp130, and His168 together coordinate Zn(2+).

This sequence belongs to the metallo-beta-lactamase superfamily. Glyoxalase II family. In terms of assembly, monomer. Requires Zn(2+) as cofactor.

The enzyme catalyses an S-(2-hydroxyacyl)glutathione + H2O = a 2-hydroxy carboxylate + glutathione + H(+). It participates in secondary metabolite metabolism; methylglyoxal degradation; (R)-lactate from methylglyoxal: step 2/2. Functionally, thiolesterase that catalyzes the hydrolysis of S-D-lactoyl-glutathione to form glutathione and D-lactic acid. The polypeptide is Hydroxyacylglutathione hydrolase (Legionella pneumophila (strain Corby)).